A 218-amino-acid chain; its full sequence is UPF0301 protein RPB_4502 (218 aa).

The tract at residues 1–26 (MVTKSKRPKSGDRSGREPGNAGPIEQ) is disordered.

This sequence belongs to the UPF0301 (AlgH) family.

This Rhodopseudomonas palustris (strain HaA2) protein is UPF0301 protein RPB_4502.